Reading from the N-terminus, the 149-residue chain is Deoxyuridine 5'-triphosphate nucleotidohydrolase (149 aa).

Substrate-binding positions include 68 to 70 (RSG), asparagine 81, and 85 to 87 (LID).

This sequence belongs to the dUTPase family. It depends on Mg(2+) as a cofactor.

It carries out the reaction dUTP + H2O = dUMP + diphosphate + H(+). It participates in pyrimidine metabolism; dUMP biosynthesis; dUMP from dCTP (dUTP route): step 2/2. Functionally, this enzyme is involved in nucleotide metabolism: it produces dUMP, the immediate precursor of thymidine nucleotides and it decreases the intracellular concentration of dUTP so that uracil cannot be incorporated into DNA. The chain is Deoxyuridine 5'-triphosphate nucleotidohydrolase from Laribacter hongkongensis (strain HLHK9).